A 1307-amino-acid polypeptide reads, in one-letter code: Cellulose synthase 2 operon protein C (1307 aa).

The first 55 residues, 1–55, serve as a signal peptide directing secretion; sequence MTRPRGPAPRDGAAWRRDPARRVLLRDAVRGREGGLRLACAVMAGLIVSGGVACA. 9 TPR repeats span residues 97-130, 270-303, 339-372, 374-406, 458-491, 493-525, 528-561, 754-787, and 788-821; these read LELL…EPDN, LDGL…EPIT, AAND…DPHD, DALG…GPDA, LTVL…APRD, GALF…APAM, RLEA…DPDD, IGLA…HPDS, and VEAH…KPAN.

The protein belongs to the AcsC/BcsC family.

The protein localises to the cell outer membrane. It participates in glycan metabolism; bacterial cellulose biosynthesis. In terms of biological role, required for maximal bacterial cellulose synthesis. The sequence is that of Cellulose synthase 2 operon protein C (bcsCII) from Komagataeibacter xylinus (Gluconacetobacter xylinus).